Consider the following 277-residue polypeptide: Sulfur carrier protein FdhD (277 aa).

Residue Cys121 is the Cysteine persulfide intermediate of the active site. Mo-bis(molybdopterin guanine dinucleotide) is bound at residue 260-265 (FCKPGR).

It belongs to the FdhD family.

It is found in the cytoplasm. Required for formate dehydrogenase (FDH) activity. Acts as a sulfur carrier protein that transfers sulfur from IscS to the molybdenum cofactor prior to its insertion into FDH. This is Sulfur carrier protein FdhD from Escherichia coli O6:K15:H31 (strain 536 / UPEC).